A 492-amino-acid polypeptide reads, in one-letter code: 2-succinylbenzoate--CoA ligase (492 aa).

Belongs to the ATP-dependent AMP-binding enzyme family. MenE subfamily.

The enzyme catalyses 2-succinylbenzoate + ATP + CoA = 2-succinylbenzoyl-CoA + AMP + diphosphate. It functions in the pathway quinol/quinone metabolism; 1,4-dihydroxy-2-naphthoate biosynthesis; 1,4-dihydroxy-2-naphthoate from chorismate: step 5/7. The protein operates within quinol/quinone metabolism; menaquinone biosynthesis. Converts 2-succinylbenzoate (OSB) to 2-succinylbenzoyl-CoA (OSB-CoA). This is 2-succinylbenzoate--CoA ligase from Staphylococcus aureus (strain MSSA476).